The chain runs to 372 residues: Histidinol-phosphate aminotransferase (372 aa).

Lys-230 is modified (N6-(pyridoxal phosphate)lysine).

This sequence belongs to the class-II pyridoxal-phosphate-dependent aminotransferase family. Histidinol-phosphate aminotransferase subfamily. As to quaternary structure, homodimer. The cofactor is pyridoxal 5'-phosphate.

The catalysed reaction is L-histidinol phosphate + 2-oxoglutarate = 3-(imidazol-4-yl)-2-oxopropyl phosphate + L-glutamate. It functions in the pathway amino-acid biosynthesis; L-histidine biosynthesis; L-histidine from 5-phospho-alpha-D-ribose 1-diphosphate: step 7/9. This Paenarthrobacter aurescens (strain TC1) protein is Histidinol-phosphate aminotransferase.